We begin with the raw amino-acid sequence, 134 residues long: Shikimate kinase (134 aa).

It belongs to the shikimate kinase family.

Its subcellular location is the cytoplasm. It carries out the reaction shikimate + ATP = 3-phosphoshikimate + ADP + H(+). Its pathway is metabolic intermediate biosynthesis; chorismate biosynthesis; chorismate from D-erythrose 4-phosphate and phosphoenolpyruvate: step 5/7. The chain is Shikimate kinase (aroK) from Neisseria gonorrhoeae.